A 125-amino-acid chain; its full sequence is Large ribosomal subunit protein eL8 (125 aa).

It belongs to the eukaryotic ribosomal protein eL8 family. Part of the 50S ribosomal subunit. Probably part of the RNase P complex.

Its subcellular location is the cytoplasm. Functionally, multifunctional RNA-binding protein that recognizes the K-turn motif in ribosomal RNA, the RNA component of RNase P, box H/ACA, box C/D and box C'/D' sRNAs. The sequence is that of Large ribosomal subunit protein eL8 from Nanoarchaeum equitans (strain Kin4-M).